A 1035-amino-acid polypeptide reads, in one-letter code: Isoleucine--tRNA ligase (1035 aa).

The 'HIGH' region motif lies at 48-58 (PTANGRPHVGH). The 'KMSKS' region signature appears at 589–593 (KMSKH). Lysine 592 is an ATP binding site.

It belongs to the class-I aminoacyl-tRNA synthetase family. IleS type 2 subfamily. As to quaternary structure, monomer. Zn(2+) serves as cofactor.

Its subcellular location is the cytoplasm. It carries out the reaction tRNA(Ile) + L-isoleucine + ATP = L-isoleucyl-tRNA(Ile) + AMP + diphosphate. In terms of biological role, catalyzes the attachment of isoleucine to tRNA(Ile). As IleRS can inadvertently accommodate and process structurally similar amino acids such as valine, to avoid such errors it has two additional distinct tRNA(Ile)-dependent editing activities. One activity is designated as 'pretransfer' editing and involves the hydrolysis of activated Val-AMP. The other activity is designated 'posttransfer' editing and involves deacylation of mischarged Val-tRNA(Ile). This Clostridium acetobutylicum (strain ATCC 824 / DSM 792 / JCM 1419 / IAM 19013 / LMG 5710 / NBRC 13948 / NRRL B-527 / VKM B-1787 / 2291 / W) protein is Isoleucine--tRNA ligase.